The primary structure comprises 277 residues: MEMO1 family protein TM_0087 (277 aa).

The protein belongs to the MEMO1 family.

This is MEMO1 family protein TM_0087 from Thermotoga maritima (strain ATCC 43589 / DSM 3109 / JCM 10099 / NBRC 100826 / MSB8).